The chain runs to 204 residues: Elongation factor Ts (204 aa).

The segment at Thr-80–Val-83 is involved in Mg(2+) ion dislocation from EF-Tu.

The protein belongs to the EF-Ts family.

It localises to the cytoplasm. Associates with the EF-Tu.GDP complex and induces the exchange of GDP to GTP. It remains bound to the aminoacyl-tRNA.EF-Tu.GTP complex up to the GTP hydrolysis stage on the ribosome. This chain is Elongation factor Ts, found in Caldicellulosiruptor saccharolyticus (strain ATCC 43494 / DSM 8903 / Tp8T 6331).